A 118-amino-acid polypeptide reads, in one-letter code: Large ribosomal subunit protein bL20 (118 aa).

Belongs to the bacterial ribosomal protein bL20 family.

Functionally, binds directly to 23S ribosomal RNA and is necessary for the in vitro assembly process of the 50S ribosomal subunit. It is not involved in the protein synthesizing functions of that subunit. The chain is Large ribosomal subunit protein bL20 from Pseudoalteromonas atlantica (strain T6c / ATCC BAA-1087).